A 153-amino-acid chain; its full sequence is Prostaglandin E synthase (153 aa).

The Lumenal portion of the chain corresponds to 1–13 (MPPSGLELMNGQV). The chain crosses the membrane as a helical span at residues 14–42 (LPAFLLCSALLVIKMYVVAVITGQVRLRK). Position 39 (R39) interacts with glutathione. The Cytoplasmic portion of the chain corresponds to 43–61 (KAFANPEDAQRHGGLQYCR). Residues 62–91 (NDPDVERCLRAHRNDMETIYPFLFLGFVYS) traverse the membrane as a helical segment. 74 to 78 (RNDME) contacts glutathione. Topologically, residues 92-96 (FLGPN) are lumenal. The helical transmembrane segment at 97 to 120 (PFVARMHFLVFFLGRMVHTVAYLG) threads the bilayer. Positions 114 and 118 each coordinate glutathione. Over 121–124 (KLRA) the chain is Cytoplasmic. The helical transmembrane segment at 125 to 153 (PTRSLAYTLAQLPCASMALQIVWEAARHL) threads the bilayer. Residue 127-131 (RSLAY) coordinates glutathione.

The protein belongs to the MAPEG family. As to quaternary structure, homotrimer. Glutathione is required as a cofactor.

It is found in the membrane. Its subcellular location is the cytoplasm. The protein localises to the perinuclear region. It carries out the reaction prostaglandin H2 = prostaglandin E2. It catalyses the reaction 2-glyceryl-prostaglandin H2 = 2-glyceryl-prostaglandin E2. The catalysed reaction is prostaglandin G2 = (15S)-15-hydroperoxy-prostaglandin E2. The enzyme catalyses 1-chloro-2,4-dinitrobenzene + glutathione = 2,4-dinitrophenyl-S-glutathione + chloride + H(+). It carries out the reaction (5S)-hydroperoxy-(6E,8Z,11Z,14Z)-eicosatetraenoate + 2 glutathione = (5S)-hydroxy-(6E,8Z,11Z,14Z)-eicosatetraenoate + glutathione disulfide + H2O. Its pathway is lipid metabolism; prostaglandin biosynthesis. Its function is as follows. Terminal enzyme of the cyclooxygenase (COX)-2-mediated prostaglandin E2 (PGE2) biosynthetic pathway. Catalyzes the glutathione-dependent oxidoreduction of prostaglandin endoperoxide H2 (PGH2) to prostaglandin E2 (PGE2) in response to inflammatory stimuli. Plays a key role in inflammation response, fever and pain. Also catalyzes the oxidoreduction of endocannabinoids into prostaglandin glycerol esters and PGG2 into 15-hydroperoxy-PGE2. In addition, displays low glutathione transferase and glutathione-dependent peroxidase activities, toward 1-chloro-2,4-dinitrobenzene and 5-hydroperoxyicosatetraenoic acid (5-HPETE), respectively. This chain is Prostaglandin E synthase (PTGES), found in Bos taurus (Bovine).